Here is a 289-residue protein sequence, read N- to C-terminus: Energy-coupling factor transporter ATP-binding protein EcfA2 (289 aa).

The ABC transporter domain occupies 3–246 (IEIKDVEHRY…KDDIAALGLD (244 aa)). 40-47 (GHTGSGKS) contributes to the ATP binding site.

The protein belongs to the ABC transporter superfamily. Energy-coupling factor EcfA family. Forms a stable energy-coupling factor (ECF) transporter complex composed of 2 membrane-embedded substrate-binding proteins (S component), 2 ATP-binding proteins (A component) and 2 transmembrane proteins (T component).

Its subcellular location is the cell membrane. In terms of biological role, ATP-binding (A) component of a common energy-coupling factor (ECF) ABC-transporter complex. Unlike classic ABC transporters this ECF transporter provides the energy necessary to transport a number of different substrates. This Bacillus licheniformis (strain ATCC 14580 / DSM 13 / JCM 2505 / CCUG 7422 / NBRC 12200 / NCIMB 9375 / NCTC 10341 / NRRL NRS-1264 / Gibson 46) protein is Energy-coupling factor transporter ATP-binding protein EcfA2.